The following is a 412-amino-acid chain: Tyrosine--tRNA ligase (412 aa).

An L-tyrosine-binding site is contributed by tyrosine 31. A 'HIGH' region motif is present at residues 36-45 (PTAPSLHIGH). L-tyrosine contacts are provided by tyrosine 162 and glutamine 166. Positions 222–226 (KIGKT) match the 'KMSKS' region motif. An ATP-binding site is contributed by lysine 225. The 68-residue stretch at 345 to 412 (KRWLDVVVQL…KKKKQVIDLN (68 aa)) folds into the S4 RNA-binding domain.

The protein belongs to the class-I aminoacyl-tRNA synthetase family. TyrS type 1 subfamily. In terms of assembly, homodimer.

The protein resides in the cytoplasm. The catalysed reaction is tRNA(Tyr) + L-tyrosine + ATP = L-tyrosyl-tRNA(Tyr) + AMP + diphosphate + H(+). Catalyzes the attachment of tyrosine to tRNA(Tyr) in a two-step reaction: tyrosine is first activated by ATP to form Tyr-AMP and then transferred to the acceptor end of tRNA(Tyr). The chain is Tyrosine--tRNA ligase from Chlamydia muridarum (strain MoPn / Nigg).